The sequence spans 129 residues: Snaclec rhodocetin subunit beta (129 aa).

One can recognise a C-type lectin domain in the interval 3–125 (RCPTTWSASK…EEKNAFLCKF (123 aa)). 3 disulfides stabilise this stretch: Cys4/Cys15, Cys32/Cys123, and Cys98/Cys115.

In terms of assembly, heterotetramer of subunit alpha, beta, gamma and delta; only the gamma and the delta subunits are disulfide-linked. Alpha-beta heterodimer and gamma-delta heterodimer associate orthogonally, giving a cruciform conformation. This heterotetramer may covalently dimerizes thanks to the gamma subunit. Expressed by the venom gland.

Its subcellular location is the secreted. In terms of biological role, potent inhibitor of collagen-induced platelet aggregation. It acts by binding to the integrin alpha2A domain and blocks collagen binding to integrin alpha-2/beta-1 (ITGA2/ITGB1). The gamma/delta subunits mainly contribute to this activity. The sequence is that of Snaclec rhodocetin subunit beta from Calloselasma rhodostoma (Malayan pit viper).